We begin with the raw amino-acid sequence, 1387 residues long: Regulator of G-protein signaling 12 (1387 aa).

The PDZ domain maps to 21 to 97 (SVEVARGRAG…GVLRMVISEG (77 aa)). 2 positions are modified to phosphoserine: Ser171 and Ser194. Lys195 is covalently cross-linked (Glycyl lysine isopeptide (Lys-Gly) (interchain with G-Cter in SUMO2)). The PID domain occupies 227-339 (VAMVVGYLGS…GALRTSCHVF (113 aa)). Disordered regions lie at residues 409–428 (ADAH…IGNF) and 442–488 (LGGG…PLET). Residues 412–428 (HQNNSTSSNSDSGIGNF) are compositionally biased toward polar residues. Omega-N-methylarginine is present on residues Arg524 and Arg633. A disordered region spans residues 620–650 (RKTKEDKKSSKLGRGVALAQTSQRTSARRSF). 2 positions are modified to phosphoserine: Ser661 and Ser671. Positions 715–832 (SFERLLQDPV…LKSQLYQECV (118 aa)) constitute an RGS domain. Residues 842-934 (PDSQQVPSSP…ANGGLCRRES (93 aa)) are disordered. A compositionally biased stretch (low complexity) spans 849–869 (SSPASKHSISSDHSNVSTPKK). Residues Ser850 and Ser879 each carry the phosphoserine modification. Basic and acidic residues predominate over residues 914–923 (DHGDHAHDAL). Ser943 bears the Phosphoserine mark. 2 RBD domains span residues 962–1032 (KHCC…LGKR) and 1034–1104 (LFRL…LEER). A compositionally biased stretch (basic and acidic residues) spans 1103–1117 (ERDPSRGKVSTEKQK). A disordered region spans residues 1103–1168 (ERDPSRGKVS…ARDPRLSKRE (66 aa)). Residues 1122–1133 (KQSSAVNSSPRN) show a composition bias toward polar residues. Basic and acidic residues predominate over residues 1151-1168 (IRGENGKSARDPRLSKRE). The 23-residue stretch at 1187-1209 (AEEFFELISKAQSNRADDQRGLL) folds into the GoLoco domain. Disordered regions lie at residues 1224-1325 (PGSS…EGTT) and 1349-1387 (ADLT…TSRF). The span at 1261–1280 (SDSPATSPASAQSPCSAYSP) shows a compositional bias: low complexity. A compositionally biased stretch (polar residues) spans 1315–1325 (SCISTVQEGTT). Residues 1367–1380 (LPPPPLPQDTPGPT) are compositionally biased toward pro residues.

As to quaternary structure, interacts with GNAI1, GNAI2 and GNAI3; the interactions are GDP-dependent. As to expression, detected in brain cortex GABAergic neurons, in striatum and substantia nigra, and in the Purkinje cell layer in the cerebellum and hippocampus (at protein level). Expressed at high levels in brain and lung and lower levels in testis, heart, and spleen.

It localises to the nucleus. Its subcellular location is the cytoplasm. The protein resides in the cell projection. It is found in the dendrite. The protein localises to the synapse. In terms of biological role, regulates G protein-coupled receptor signaling cascades. Inhibits signal transduction by increasing the GTPase activity of G protein alpha subunits, thereby driving them into their inactive GDP-bound form. The chain is Regulator of G-protein signaling 12 (Rgs12) from Rattus norvegicus (Rat).